Reading from the N-terminus, the 862-residue chain is C-type lectin domain-containing protein 161 (862 aa).

The N-terminal stretch at 1–20 (MYRRTTLWFLLLFQPILVFA) is a signal peptide. Asn-22 and Asn-91 each carry an N-linked (GlcNAc...) asparagine glycan. One can recognise a C-type lectin 1 domain in the interval 41 to 154 (SLNACFKLYN…VGQKLPFVCT (114 aa)). Cysteines 62 and 153 form a disulfide. The disordered stretch occupies residues 162-291 (AGPAPVHAMR…SDESSDEAYD (130 aa)). A compositionally biased stretch (basic and acidic residues) spans 198–218 (SDKKEKKEVASDKKKESKKDE). Asn-222 carries N-linked (GlcNAc...) asparagine glycosylation. Basic and acidic residues predominate over residues 242 to 252 (SDKKESSKKDE). N-linked (GlcNAc...) asparagine glycosylation is found at Asn-258, Asn-279, and Asn-352. Positions 265–283 (ANAEMSASISASSANSSSD) are enriched in low complexity. Disordered regions lie at residues 377–437 (MTMR…SASL), 450–469 (ALASKSKSDSSDQSKDQKSA), and 474–504 (AVVSENKHPTKKPEDPKSTKTTTEEPDIDES). The span at 388–418 (SSSNTDSESASISESSQASEQAVMAAAMSAK) shows a compositional bias: low complexity. Basic and acidic residues-rich tracts occupy residues 455-467 (SKSDSSDQSKDQK) and 478-491 (ENKHPTKKPEDPKS). Residue Asn-559 is glycosylated (N-linked (GlcNAc...) asparagine). 2 consecutive C-type lectin domains span residues 562 to 687 (APAL…SVLC) and 716 to 828 (KNGK…FVSV). Cys-653 and Cys-678 are disulfide-bonded. Asn-765 carries N-linked (GlcNAc...) asparagine glycosylation. A disulfide bridge connects residues Cys-807 and Cys-819. N-linked (GlcNAc...) asparagine glycosylation is found at Asn-831 and Asn-857.

It localises to the secreted. The polypeptide is C-type lectin domain-containing protein 161 (clec-161) (Caenorhabditis elegans).